The chain runs to 115 residues: Large ribosomal subunit protein P2 (115 aa).

N-acetylmethionine is present on Met1. Phosphoserine is present on residues Ser17 and Ser19. The residue at position 21 (Lys21) is an N6-acetyllysine; alternate. Lys21 is subject to N6-succinyllysine; alternate. Over residues 76 to 90 (APGSAAPAAGSAPAA) the composition is skewed to low complexity. The segment at 76-115 (APGSAAPAAGSAPAAAEEKKEEKKEESEESDDDMGFGLFD) is disordered. 2 positions are modified to phosphoserine: Ser79 and Ser86. Positions 91–101 (AEEKKEEKKEE) are enriched in basic and acidic residues. Ser102 and Ser105 each carry phosphoserine.

Belongs to the eukaryotic ribosomal protein P1/P2 family. In terms of assembly, heterodimer with RPLP1 at the lateral ribosomal stalk of the large ribosomal subunit.

Functionally, plays an important role in the elongation step of protein synthesis. This Bos taurus (Bovine) protein is Large ribosomal subunit protein P2 (RPLP2).